A 558-amino-acid chain; its full sequence is MAAQRVAMRNIKECLRLKFEGGLSHEKIARALQLSKGVVSKYVTAAAETGMEWPALAVLDEVALAAALLPTARVRQTRGERVLPDLITIHRELRRKGVTLQLLWEEYVAAHPEQPTYRYTQFVEHYRRYASTLKRSMRQQHRAGEKLFIDYAGPTLPVIDPATGEISRAHIFVAALGASNYTYACATPGETQVDWLTALGQAFSYFGGVSEMVVPDNPRALIAHPDRYEPGLNRAALECARHYDTVMLPARPRKPQDKAKAEVAVQVVERWIMRVRHQQFFSLHALNQAIAKLLEDLNQRPFKKLDGCRREWFERLDQPVLRPLPQHPYEVVTFKRCKVNIDYHIEVNGGFYSVPSALARQSVDVRLSAHTVEVLHGNRRVASHLRLQRRGAYSTQSEHMPASHKAHREWTPQRLLDWGERIGPQTRQIVEHQLTHKPHPEMGYRACLGLLSLARQYGNARLEAAASRAVQLRALNGRTVRNLLKQGLDQQPLPKPATPAAQPSSHENVRGADYYTQEELFDDDPTHPEPIAPTAAGRHGPSTGRTMDAAGQPQPELR.

The HTH IS408-type domain occupies 11 to 93; that stretch reads IKECLRLKFE…PDLITIHREL (83 aa). The segment at residues 23–44 is a DNA-binding region (H-T-H motif); that stretch reads LSHEKIARALQLSKGVVSKYVT. The region spanning 139 to 336 is the Integrase catalytic domain; it reads QQHRAGEKLF…HPYEVVTFKR (198 aa). A disordered region spans residues 486–558; sequence QGLDQQPLPK…AAGQPQPELR (73 aa).

The protein belongs to the transposase IS21/IS408/IS1162 family.

Required for the transposition of the insertion element. The sequence is that of Putative transposase for insertion sequence IS1162 from Pseudomonas fluorescens.